The primary structure comprises 966 residues: Phosphoenolpyruvate carboxylase (966 aa).

The residue at position 10 (serine 10) is a Phosphoserine. Active-site residues include histidine 171 and lysine 601.

This sequence belongs to the PEPCase type 1 family. Homotetramer. It depends on Mg(2+) as a cofactor.

Its subcellular location is the cytoplasm. The enzyme catalyses oxaloacetate + phosphate = phosphoenolpyruvate + hydrogencarbonate. Its activity is regulated as follows. By light-reversible phosphorylation. Functionally, through the carboxylation of phosphoenolpyruvate (PEP) it forms oxaloacetate, a four-carbon dicarboxylic acid source for the tricarboxylic acid cycle. This Medicago sativa (Alfalfa) protein is Phosphoenolpyruvate carboxylase (PEPC).